The primary structure comprises 681 residues: Sorting nexin-41 (681 aa).

Acidic residues predominate over residues 1–12 (MSTDNLFEDIEQ). Residues 1-94 (MSTDNLFEDI…HNTSLNNGYP (94 aa)) form a disordered region. Over residues 13–24 (DNNPSFYGNPSI) the composition is skewed to polar residues. One can recognise a PX domain in the interval 113 to 236 (NDSQLQVDII…KFFDPNYELC (124 aa)). A 1,2-diacyl-sn-glycero-3-phospho-(1D-myo-inositol-3-phosphate)-binding residues include Arg151, Ser153, Lys177, and Arg200. Disordered regions lie at residues 475–505 (LASRISTDNDSNNSNNSGNNNNDGDLDTENF) and 558–597 (TATGSTEQQSQQQSAPNSPQREQQQQQSQSQSHHSHQTSI). 2 stretches are compositionally biased toward low complexity: residues 482–497 (DNDSNNSNNSGNNNND) and 558–589 (TATGSTEQQSQQQSAPNSPQREQQQQQSQSQS).

This sequence belongs to the sorting nexin family.

Its subcellular location is the endosome membrane. It is found in the endomembrane system. Its function is as follows. May be required for cytoplasm to vacuole transport (Cvt) and pexophagy. The chain is Sorting nexin-41 (SNX41) from Candida albicans (strain SC5314 / ATCC MYA-2876) (Yeast).